Here is a 385-residue protein sequence, read N- to C-terminus: T-box transcription factor TBX10 (385 aa).

Positions 69–252 (LEMKPLWEEF…SNPFAKGFRE (184 aa)) form a DNA-binding region, T-box. 2 disordered regions span residues 283–310 (GSAE…NQLL) and 328–359 (QNLY…AGDQ). The span at 293–307 (KASASSSRTPTQPHN) shows a compositional bias: polar residues. Residues 331 to 347 (YPGSPSRAGPPRARLAP) show a composition bias toward low complexity.

It localises to the nucleus. Probable transcriptional regulator involved in developmental processes. This Mus musculus (Mouse) protein is T-box transcription factor TBX10 (Tbx10).